We begin with the raw amino-acid sequence, 203 residues long: MILNKEFYKQGALILAKELLGKVIIRKVDGVTLRAKIVETEAYIGEIDKASHAYNGRRTERTEPLFREGGIAYVYFIYGKYYCFNVISGLEDKGEGVLIRAFEPLNEFDYLAKKRFNQNYDELSETKKKAITNGPSKLCIAFSIDKSENYKRLYDEGDFYIEEGEKDTFKIVETKRIGIDYAEEAIDFPWRFYIEGNKYISKK.

It belongs to the DNA glycosylase MPG family.

This Clostridium beijerinckii (strain ATCC 51743 / NCIMB 8052) (Clostridium acetobutylicum) protein is Putative 3-methyladenine DNA glycosylase.